A 528-amino-acid polypeptide reads, in one-letter code: Tyrosine--tRNA ligase, cytoplasmic (528 aa).

At Met-1 the chain carries N-acetylmethionine. N-acetylglycine; in Tyrosine--tRNA ligase, cytoplasmic, N-terminally processed is present on Gly-2. Tyr-39 lines the L-tyrosine pocket. Tyr-39 lines the trans-resveratrol pocket. The 'HIGH' region motif lies at 44-52; it reads TTGKPHVAY. Positions 166, 170, 173, and 188 each coordinate L-tyrosine. The trans-resveratrol site is built by Gln-170 and Asp-173. Lys-197 is subject to N6-acetyllysine. Ser-205 carries the phosphoserine modification. An N6-acetyllysine modification is found at Lys-206. The 'KMSKS' region motif lies at 222-226; that stretch reads KMSSS. A Nuclear localization signal motif is present at residues 242–247; sequence KKKLKK. Positions 339 to 363 are disordered; the sequence is AAYPDPSKQKPPAKGPAKNSEPEEV. One can recognise a tRNA-binding domain in the interval 364 to 468; it reads IPSRLDIRVG…AGSAPGERVF (105 aa). Phosphoserine is present on Ser-386. Residues Lys-474, Lys-482, and Lys-490 each carry the N6-acetyllysine modification.

The protein belongs to the class-I aminoacyl-tRNA synthetase family. In terms of assembly, homodimer. Interacts (when binding to resveratrol) with PARP1; interaction stimulates the poly-ADP-ribosyltransferase activity of PARP1.

The protein localises to the cytoplasm. It is found in the nucleus. It carries out the reaction tRNA(Tyr) + L-tyrosine + ATP = L-tyrosyl-tRNA(Tyr) + AMP + diphosphate + H(+). Its activity is regulated as follows. Resveratrol strongly inhibits the tyrosine--tRNA ligase activity. Functionally, tyrosine--tRNA ligase that catalyzes the attachment of tyrosine to tRNA(Tyr) in a two-step reaction: tyrosine is first activated by ATP to form Tyr-AMP and then transferred to the acceptor end of tRNA(Tyr). Also acts as a positive regulator of poly-ADP-ribosylation in the nucleus, independently of its tyrosine--tRNA ligase activity. Activity is switched upon resveratrol-binding: resveratrol strongly inhibits the tyrosine--tRNA ligase activity and promotes relocalization to the nucleus, where YARS1 specifically stimulates the poly-ADP-ribosyltransferase activity of PARP1. In Mus musculus (Mouse), this protein is Tyrosine--tRNA ligase, cytoplasmic (Yars1).